A 115-amino-acid chain; its full sequence is Large ribosomal subunit protein bL20c (115 aa).

It belongs to the bacterial ribosomal protein bL20 family.

Its subcellular location is the plastid. It is found in the chloroplast. Binds directly to 23S ribosomal RNA and is necessary for the in vitro assembly process of the 50S ribosomal subunit. It is not involved in the protein synthesizing functions of that subunit. In Cyanidium caldarium (Red alga), this protein is Large ribosomal subunit protein bL20c (rpl20).